A 7071-amino-acid polypeptide reads, in one-letter code: Replicase polyprotein 1ab (7071 aa).

In terms of domain architecture, CoV Nsp1 globular spans 12-127 (THVQLSLPVL…YRNVLLRKNG (116 aa)). A BetaCoV Nsp1 C-terminal domain is found at 148 to 179 (ELGTDPIEDYEQNWNTKHGSGVLRELTRELNG). Positions 183–456 (TRYVDNNFCG…NEDLLEILSR (274 aa)) constitute a CoV Nsp2 N-terminal domain. C200, C231, H234, H236, C323, C326, C341, C344, C370, C373, H382, and C416 together coordinate Zn(2+). A C2H2 region spans residues 200–236 (CIKDLLARAGKSMCTLSEQLDYIESKRGVYCCRDHGH). Positions 323–344 (CNHCDEVSWQTCDFLKATCEQC) are C4. Residues 370 to 416 (CPACQDPEIGPEHSAADYHNHSNIETRLRKGGRTRCFGGCVFAYVGC) form a C2HC region. The CoV Nsp2 middle domain occupies 458 to 688 (RVNINIVGDF…VDVVNKALEM (231 aa)). Positions 690-818 (IDQVTIAGAK…TNNVFRLKGG (129 aa)) constitute a CoV Nsp2 C-terminal domain. The Ubiquitin-like 1 domain occupies 822 to 930 (KGVTFGEDTV…MYCSFYPPDE (109 aa)). 3 Macro domains span residues 1001–1167 (VNQL…MDYL), 1205–1333 (KIKA…LPSE), and 1341–1468 (ILGT…TSSS). The DPUP domain maps to 1470–1536 (TSEDHFVETV…PLDKLKSLLS (67 aa)). The Ubiquitin-like 2 domain maps to 1540–1595 (VKTIKVFTTVDNTNLHTQLVDMSMTYGQQLGPTYLEGADVTKIKPHVNHEGKTFFV). The Peptidase C16 domain occupies 1609–1873 (YYHTLDESFL…YTEIEPKLDG (265 aa)). The active-site For PL-PRO activity is the C1649. Positions 1727, 1730, 1762, and 1764 each coordinate Zn(2+). A C4-type zinc finger spans residues 1727–1764 (CKHCGQKTTTLTGVEAVMYMGTLSYDNLKMGVSIPCVC). Catalysis depends on for PL-PRO activity residues H1810 and D1824. The region spanning 1886–1996 (PIDLIPTQPL…CLWSTKPVDT (111 aa)) is the Nucleic acid-binding domain. The region spanning 2021 to 2130 (PTPEEVVENP…LGQAAVTTSN (110 aa)) is the G2M domain. A helical transmembrane segment spans residues 2201 to 2221 (LFTIAMWLLLLSICLGSLIYV). The segment at 2201 to 2369 (LFTIAMWLLL…IFFASFYYIW (169 aa)) is HD1. The 71-residue stretch at 2222-2292 (TAALGVLLSN…QVTISSYKLD (71 aa)) folds into the 3Ecto domain. 2 disulfides stabilise this stretch: C2238–C2266 and C2257–C2263. 2 consecutive transmembrane segments (helical) span residues 2312–2334 (FFYL…SHFI) and 2349–2369 (MAPV…YYIW). The interval 2370–2460 (KSYVHIMDGC…QFKRPINPTD (91 aa)) is Y1. The CoV Nsp3 Y domain maps to 2370 to 2738 (KSYVHIMDGC…ITTKISLKGG (369 aa)). Residues H2374, C2379, C2384, C2387, C2420, H2423, C2427, and C2430 each coordinate Zn(2+). Residues 2374–2387 (HIMDGCTSSTCMMC) form a ZF1 region. The tract at residues 2420–2430 (CKTHNWNCLNC) is ZF2. The tract at residues 2461-2555 (QSSYVVDSVA…LLDQALVSDV (95 aa)) is Y2. The tract at residues 2461 to 2738 (QSSYVVDSVA…ITTKISLKGG (278 aa)) is coV-Y. The segment at 2556-2637 (GDSTEVSVKM…ECLKLSHHSD (82 aa)) is Y3. The Y4 stretch occupies residues 2638–2738 (LEVTGDSCNN…ITTKISLKGG (101 aa)). The next 6 helical transmembrane spans lie at 2753 to 2773 (LLCV…ILSV), 3020 to 3040 (ASVV…YYFM), 3059 to 3079 (LFLM…LPGV), 3081 to 3101 (SVFY…LAHL), 3103 to 3123 (WFAM…VFCI), and 3140 to 3160 (VVFN…TFLL). Residues 2753–3160 (LLCVLAALVC…EEAALCTFLL (408 aa)) are HD2. The Nsp4C domain occupies 3140 to 3238 (VVFNGVTFST…QTSITSAVLQ (99 aa)). The Peptidase C30 domain occupies 3239–3544 (SGFRKMAFPS…VRQCSGVTFQ (306 aa)). Residues H3279 and C3383 each act as for 3CL-PRO activity in the active site. 7 helical membrane-spanning segments follow: residues 3562-3582 (FLTS…FFVY), 3584-3604 (NAFL…MLLV), 3610-3630 (FLCL…MVYM), 3657-3676 (CVMY…RTVY), 3683-3702 (VWTL…GNAL), 3726-3746 (IMFL…LLFI), and 3754-3774 (IMLV…LFCL). Residues 3562–3774 (FLTSLLILVQ…CCCYFGLFCL (213 aa)) are HD3. Positions 3835–3917 (SKMSDVKCTS…EMLDNRATLQ (83 aa)) constitute a RdRp Nsp7 cofactor domain. A RdRp Nsp8 cofactor domain is found at 3918 to 4115 (AIASEFSSLP…LRANSAVKLQ (198 aa)). Positions 4116–4228 (NNELSPVALR…GSLAATVRLQ (113 aa)) constitute a Nsp9 ssRNA-binding domain. Positions 4229–4367 (AGNATEVPAN…CDQLREPMMQ (139 aa)) constitute an ExoN/MTase coactivator domain. C4302, C4305, H4311, C4318, C4345, C4348, C4356, and C4358 together coordinate Zn(2+). 2 zinc fingers span residues 4302–4318 (CLYC…KGFC) and 4345–4358 (CTVC…GCSC). Positions 4374–4628 (FLNRVCGVSA…AAESHMDADL (255 aa)) constitute a NiRAN domain. N4576 and D4585 together coordinate Mn(2+). The Nsp12 Interface domain occupies 4633–4731 (IKWDLLKYDF…HNQDVNLHSS (99 aa)). Zn(2+) contacts are provided by H4662, C4668, C4673, C4677, and C4854. The region spanning 4732–5299 (RLSFKELLVY…AMYTPHTVLQ (568 aa)) is the Nsp12 RNA-dependent RNA polymerase domain. A rdRp Fingers N-ter region spans residues 4734-4948 (SFKELLVYAA…HQKLLKSIAA (215 aa)). The interval 4949–4987 (TRGATVVIGTSKFYGGWHNMLKTVYSDVETPHLMGWDYP) is rdRp Palm N-ter. The RdRp catalytic domain maps to 4979 to 5141 (PHLMGWDYPK…CYNSNYAAQG (163 aa)). Residues 4988–5046 (KCDRAMPNMLRIMASLVLARKHSTCCNLSHRFYRLANECAQVLSEMVMCGGSLYVKPGG) form a rdRp Fingers C-ter region. Residues H5009, C5012, and C5013 each coordinate Zn(2+). The segment at 5047-5182 (TSSGDATTAY…TKGPHEFCSQ (136 aa)) is rdRp Palm C-ter. Active-site residues include S5126, D5127, and D5128. The interval 5183–5299 (HTMLVKQGDD…AMYTPHTVLQ (117 aa)) is rdRp Thumb. The region spanning 5300–5412 (AVGACVLCNS…TDFNAIATCD (113 aa)) is the CV ZBD domain. Residues C5304, C5307, C5315, C5318, C5325, C5328, H5332, H5338, C5349, C5354, C5371, and H5374 each coordinate Zn(2+). The region spanning 5556 to 5737 (NISDEFSSNV…MKTIGPDMFL (182 aa)) is the (+)RNA virus helicase ATP-binding domain. Residue 5581-5588 (GPPGTGKS) participates in ATP binding. The region spanning 5738-5907 (GTCRRCPAEI…TLQAENVTGL (170 aa)) is the (+)RNA virus helicase C-terminal domain. In terms of domain architecture, ExoN spans 5972 to 6187 (MFITREEAIR…RCLAVHECFV (216 aa)). Active-site residues include D5990, E5992, and E6091. C6107, C6110, C6126, H6129, H6157, C6161, and H6164 together coordinate Zn(2+). Residues H6168 and D6173 contribute to the active site. C6179 contacts Zn(2+). An N7-MTase domain is found at 6196-6427 (YPIIGDELKI…NLWNTFTRLQ (232 aa)). 6231–6237 (DIGNPKA) lines the S-adenosyl-L-methionine pocket. Residues 6314-6328 (CDGGSLYVNKHAFHT) form a gpppA-binding region. Residues C6352, C6373, C6384, and H6387 each contribute to the Zn(2+) site. The Nsp15 N-terminal oligomerization domain occupies 6428 to 6488 (SLENVAYNVV…NVAFELWAKR (61 aa)). Positions 6489–6614 (NIKSVPEIKI…YFKKVDGIIQ (126 aa)) constitute an AV-Nsp11N/CoV-Nsp15M domain. One can recognise a NendoU domain in the interval 6631 to 6770 (KPRSQMETDF…KDGHVETFYP (140 aa)). Residues H6661, H6676, K6716, K6819, D6903, K6943, and E6976 contribute to the active site. The region spanning 6775–7069 (SQAWQPGVAM…RVVVSSDILV (295 aa)) is the Nidovirus-type SAM-dependent 2'-O-MTase domain.

This sequence belongs to the coronaviruses polyprotein 1ab family. Interacts with host PHB and PHB2. In terms of assembly, interacts with papain-like protease nsp3 and non-structural protein 6. As to quaternary structure, monomer. Homodimer. Only the homodimer shows catalytic activity. Interacts with nsp8 and nsp12 to form the replication-transcription complex (RTC): nsp12, nsp7, two subunits of nsp8, and up to two subunits of nsp13. In terms of assembly, interacts with nsp7, nsp13 and nsp12 to form the replication-transcription complex (RTC): nsp12, nsp7, two subunits of nsp8, and up to two subunits of nsp13. As to quaternary structure, interacts with nsp12. Interacts with proofreading exoribonuclease nsp14 and 2'-O-methyltransferase nsp16; these interactions enhance nsp14 and nsp16 enzymatic activities. In terms of assembly, interacts with nsp7 and nsp8 to form the replication-transcription complex (RTC): nsp12, nsp7, two subunits of nsp8, and up to two subunits of nsp13. Interacts with nsp9. As to quaternary structure, interacts with nsp8 to form the replication-transcription complex (RTC): nsp12, nsp7, two subunits of nsp8, and up to two subunits of nsp13. Mn(2+) is required as a cofactor. The cofactor is Mg(2+). Post-translationally, specific enzymatic cleavages in vivo by its own proteases yield mature proteins. 3CL-PRO and PL-PRO proteinases are autocatalytically processed.

It is found in the host membrane. Its subcellular location is the host cytoplasm. The protein resides in the host perinuclear region. It localises to the host endoplasmic reticulum-Golgi intermediate compartment. The catalysed reaction is RNA(n) + a ribonucleoside 5'-triphosphate = RNA(n+1) + diphosphate. It catalyses the reaction ATP + H2O = ADP + phosphate + H(+). The enzyme catalyses Thiol-dependent hydrolysis of ester, thioester, amide, peptide and isopeptide bonds formed by the C-terminal Gly of ubiquitin (a 76-residue protein attached to proteins as an intracellular targeting signal).. It carries out the reaction a 5'-end (N(7)-methyl 5'-triphosphoguanosine)-ribonucleoside in mRNA + S-adenosyl-L-methionine = a 5'-end (N(7)-methyl 5'-triphosphoguanosine)-(2'-O-methyl-ribonucleoside) in mRNA + S-adenosyl-L-homocysteine + H(+). The catalysed reaction is uridylyl-uridylyl-ribonucleotide-RNA = a 3'-end uridylyl-2',3'-cyclophospho-uridine-RNA + a 5'-end dephospho-ribonucleoside-RNA. It catalyses the reaction a 5'-end diphospho-ribonucleoside in mRNA + GTP + H(+) = a 5'-end (5'-triphosphoguanosine)-ribonucleoside in mRNA + diphosphate. The enzyme catalyses a 5'-end (5'-triphosphoguanosine)-ribonucleoside in mRNA + S-adenosyl-L-methionine = a 5'-end (N(7)-methyl 5'-triphosphoguanosine)-ribonucleoside in mRNA + S-adenosyl-L-homocysteine. In terms of biological role, the replicase polyprotein of coronaviruses is a multifunctional protein: it contains the activities necessary for the transcription of negative stranded RNA, leader RNA, subgenomic mRNAs and progeny virion RNA as well as proteinases responsible for the cleavage of the polyprotein into functional products. Functionally, inhibits host translation by interacting with the 40S ribosomal subunit. The nsp1-40S ribosome complex further induces an endonucleolytic cleavage near the 5'UTR of host mRNAs, targeting them for degradation. Viral mRNAs are not susceptible to nsp1-mediated endonucleolytic RNA cleavage thanks to the presence of a 5'-end leader sequence and are therefore protected from degradation. By suppressing host gene expression, nsp1 facilitates efficient viral gene expression in infected cells and evasion from host immune response. May play a role in the modulation of host cell survival signaling pathway by interacting with host PHB and PHB2. Indeed, these two proteins play a role in maintaining the functional integrity of the mitochondria and protecting cells from various stresses. Its function is as follows. Responsible for the cleavages located at the N-terminus of the replicase polyprotein. In addition, PL-PRO possesses a deubiquitinating/deISGylating activity and processes both 'Lys-48'- and 'Lys-63'-linked polyubiquitin chains from cellular substrates. Participates together with nsp4 in the assembly of virally-induced cytoplasmic double-membrane vesicles necessary for viral replication. Antagonizes innate immune induction of type I interferon by blocking the phosphorylation, dimerization and subsequent nuclear translocation of host IRF3. Also prevents host NF-kappa-B signaling. In terms of biological role, participates in the assembly of virally-induced cytoplasmic double-membrane vesicles necessary for viral replication. Functionally, cleaves the C-terminus of replicase polyprotein at 11 sites. Recognizes substrates containing the core sequence [ILMVF]-Q-|-[SGACN]. Also able to bind an ADP-ribose-1''-phosphate (ADRP). Plays a role in the initial induction of autophagosomes from host endoplasmic reticulum. Later, limits the expansion of these phagosomes that are no longer able to deliver viral components to lysosomes. Its function is as follows. Forms a hexadecamer with nsp8 (8 subunits of each) that may participate in viral replication by acting as a primase. Alternatively, may synthesize substantially longer products than oligonucleotide primers. In terms of biological role, forms a hexadecamer with nsp7 (8 subunits of each) that may participate in viral replication by acting as a primase. Alternatively, may synthesize substantially longer products than oligonucleotide primers. Functionally, forms a primer, NSP9-pU, which is utilized by the polymerase for the initiation of RNA chains. Interacts with ribosome signal recognition particle RNA (SRP). Together with NSP8, suppress protein integration into the cell membrane, thereby disrupting host immune defenses. Plays a pivotal role in viral transcription by stimulating both nsp14 3'-5' exoribonuclease and nsp16 2'-O-methyltransferase activities. Therefore plays an essential role in viral mRNAs cap methylation. Its function is as follows. RNA-directed RNA polymerase that catalyzes the transcription of viral genomic and subgenomic RNAs. Acts in complex with nsp7 and nsp8 to transcribe both the minus and positive strands of genomic RNA. The kinase-like NiRAN domain of NSP12 attaches one or more nucleotides to the amino terminus of NSP9, forming a covalent RNA-protein intermediate that serves as transcription/replication primer. Subgenomic RNAs (sgRNAs) are formed by discontinuous transcription: The polymerase has the ability to pause at transcription-regulating sequences (TRS) and jump to the leader TRS, resulting in a major deletion. This creates a series of subgenomic RNAs that are replicated, transcribed and translated. In addition, Nsp12 is a subunit of the viral RNA capping enzyme that catalyzes the RNA guanylyltransferase reaction for genomic and sub-genomic RNAs. Subsequently, the NiRAN domain transfers RNA to GDP, and forms the core cap structure GpppA-RNA. In terms of biological role, multi-functional protein with a zinc-binding domain in N-terminus displaying RNA and DNA duplex-unwinding activities with 5' to 3' polarity. Activity of helicase is dependent on magnesium. Functionally, plays a role in viral RNA synthesis through two distinct activities. The N7-guanine methyltransferase activity plays a role in the formation of the cap structure GpppA-RNA. The proofreading exoribonuclease reduces the sensitivity of the virus to RNA mutagens during replication. This activity acts on both ssRNA and dsRNA in a 3'-5' direction. Plays a role in viral transcription/replication and prevents the simultaneous activation of host cell dsRNA sensors, such as MDA5/IFIH1, OAS, and PKR. Acts by degrading the 5'-polyuridines generated during replication of the poly(A) region of viral genomic and subgenomic RNAs. Catalyzes a two-step reaction in which a 2'3'-cyclic phosphate (2'3'-cP) is first generated by 2'-O transesterification, which is then hydrolyzed to a 3'-phosphate (3'-P). If not degraded, poly(U) RNA would hybridize with poly(A) RNA tails and activate host dsRNA sensors. Its function is as follows. Methyltransferase that mediates mRNA cap 2'-O-ribose methylation to the 5'-cap structure of viral mRNAs. N7-methyl guanosine cap is a prerequisite for binding of nsp16. Therefore plays an essential role in viral mRNAs cap methylation which is essential to evade immune system. This Rhinolophus ferrumequinum (Greater horseshoe bat) protein is Replicase polyprotein 1ab (rep).